The following is a 370-amino-acid chain: Quinolinate synthase (370 aa).

Positions 62 and 83 each coordinate iminosuccinate. Cys-128 is a binding site for [4Fe-4S] cluster. Iminosuccinate contacts are provided by residues 154–156 (YAN) and Ser-171. Residue Cys-215 participates in [4Fe-4S] cluster binding. Residues 241–243 (HPE) and Thr-258 contribute to the iminosuccinate site. A [4Fe-4S] cluster-binding site is contributed by Cys-312.

It belongs to the quinolinate synthase family. Type 1 subfamily. Requires [4Fe-4S] cluster as cofactor.

The protein localises to the cytoplasm. It catalyses the reaction iminosuccinate + dihydroxyacetone phosphate = quinolinate + phosphate + 2 H2O + H(+). The protein operates within cofactor biosynthesis; NAD(+) biosynthesis; quinolinate from iminoaspartate: step 1/1. Functionally, catalyzes the condensation of iminoaspartate with dihydroxyacetone phosphate to form quinolinate. The protein is Quinolinate synthase of Neisseria meningitidis serogroup B (strain ATCC BAA-335 / MC58).